Consider the following 64-residue polypeptide: uncharacterized protein (64 aa).

Widely expressed; not found in breast.

This is an uncharacterized protein from Homo sapiens (Human).